A 315-amino-acid polypeptide reads, in one-letter code: Protein sprouty homolog 2 (315 aa).

Residues 1–14 are compositionally biased toward polar residues; that stretch reads MEARAQSGSGSQPL. 2 disordered regions span residues 1 to 38 and 51 to 140; these read MEAR…PQQV and NTNE…GSSF. The span at 20-32 shows a compositional bias: basic and acidic residues; it reads DSGRQRGEPDPRD. Over residues 88 to 100 the composition is skewed to pro residues; sequence PRQPSRPQHPPAH. The span at 109–140 shows a compositional bias: low complexity; that stretch reads RSISTVSSGSRSSTRTSTSSSSSEQRLLGSSF. The interval 118-315 is required for interaction with CAV1; that stretch reads SRSSTRTSTS…VPPRNFEKPT (198 aa). The 115-residue stretch at 177 to 291 folds into the SPR domain; that stretch reads KCEDCGKCKC…CYDRVNRPGC (115 aa). The tract at residues 178 to 315 is required for interaction with TESK1; the sequence is CEDCGKCKCK…VPPRNFEKPT (138 aa).

The protein belongs to the sprouty family. Forms heterodimers with SPRY1. Forms a tripartite complex containing GAB1, METTL13 and SPRY2. Within the complex interacts with METTL13. Interacts with RAF1. Interacts (via C-terminus) with TESK1 (via C-terminus); the interaction disrupts SPRY2 interaction with GRB2, potentially via disruption of SPRY2 serine dephosphorylation. Interacts with PPP2R1A/PP2A-A and PPP2CA/PP2A-C; the interaction with PPP2CA/PP2A-C is inhibited by interaction with TESK1, possibly by vesicular sequestration of SPRY2. Inhibition of the interaction with the serine/threonine-protein phosphatase 2A (PP2A) holoenzyme results in loss of PP2A-mediated dephosphorylation, resulting in the loss of SPRY2 interaction with GRB2. Interacts with GRB2. Interacts with CBL/C-CBL; the interaction inhibits CBL-mediated ubiquitination of EGFR. Interacts (via C-terminus) with CAV1 (via C-terminus). Post-translationally, cleaved at Pro-144 by the prolyl endopeptidase FAP (seprase) activity (in vitro).

The protein resides in the cytoplasm. The protein localises to the cytoskeleton. Its subcellular location is the cell projection. It localises to the ruffle membrane. Functionally, antagonist of fibroblast growth factor (FGF) pathways via inhibition of FGF-mediated phosphorylation of ERK1/2. Thereby acts as an antagonist of FGF-induced retinal lens fiber differentiation, may inhibit limb bud outgrowth and may negatively modulate respiratory organogenesis. Inhibits TGFB-induced epithelial-to-mesenchymal transition in retinal lens epithelial cells. Inhibits CBL/C-CBL-mediated EGFR ubiquitination. This is Protein sprouty homolog 2 (SPRY2) from Bos taurus (Bovine).